The primary structure comprises 197 residues: Phosphoheptose isomerase (197 aa).

Residues Met-34–Gln-196 enclose the SIS domain. Residue Asn-49 to Gly-51 coordinates substrate. Positions 58 and 62 each coordinate Zn(2+). Substrate is bound by residues Glu-62, Asn-91 to Asp-92, Ser-117 to Ser-119, Ser-122, and Gln-172. Gln-172 and His-180 together coordinate Zn(2+).

The protein belongs to the SIS family. GmhA subfamily. In terms of assembly, homotetramer. It depends on Zn(2+) as a cofactor.

The protein resides in the cytoplasm. It catalyses the reaction 2 D-sedoheptulose 7-phosphate = D-glycero-alpha-D-manno-heptose 7-phosphate + D-glycero-beta-D-manno-heptose 7-phosphate. It participates in carbohydrate biosynthesis; D-glycero-D-manno-heptose 7-phosphate biosynthesis; D-glycero-alpha-D-manno-heptose 7-phosphate and D-glycero-beta-D-manno-heptose 7-phosphate from sedoheptulose 7-phosphate: step 1/1. Its function is as follows. Catalyzes the isomerization of sedoheptulose 7-phosphate in D-glycero-D-manno-heptose 7-phosphate. The chain is Phosphoheptose isomerase from Shewanella sp. (strain W3-18-1).